The chain runs to 390 residues: Multidrug export protein EmrA (390 aa).

Over 1 to 24 (MSANAETQTPQQPVKKSGKRKRLL) the chain is Cytoplasmic. A helical membrane pass occupies residues 25–45 (LLLTLLFIIIAVAIGIYWFLV). At 46-390 (LRHFEETDDA…IDDIVKANAG (345 aa)) the chain is on the periplasmic side. Positions 120–180 (INSKQLQANI…QAQLDVAIQQ (61 aa)) form a coiled coil.

It belongs to the membrane fusion protein (MFP) (TC 8.A.1) family. In terms of assembly, homodimer and homotrimer. Part of the tripartite efflux system EmrAB-TolC, which is composed of an inner membrane transporter, EmrB, a periplasmic membrane fusion protein, EmrA, and an outer membrane component, TolC. The complex forms a large protein conduit and can translocate molecules across both the inner and outer membranes. Interacts with EmrB. EmrAB complex forms a dimer in vitro.

It is found in the cell inner membrane. Its function is as follows. Part of the tripartite efflux system EmrAB-TolC, which confers resistance to antibiotics such as CCCP, FCCP, 2,4-dinitrophenol and nalidixic acid. EmrA is a drug-binding protein that provides a physical link between EmrB and TolC. The sequence is that of Multidrug export protein EmrA (emrA) from Escherichia coli (strain K12).